A 310-amino-acid polypeptide reads, in one-letter code: Ribose-phosphate pyrophosphokinase (310 aa).

ATP is bound by residues 33–35 (DGE) and 92–93 (RQ). Positions 127 and 166 each coordinate Mg(2+). Lys-189 is an active-site residue. D-ribose 5-phosphate contacts are provided by residues Arg-191, Asp-215, and 219–223 (DTAGT).

This sequence belongs to the ribose-phosphate pyrophosphokinase family. Class I subfamily. Homohexamer. Mg(2+) serves as cofactor.

The protein resides in the cytoplasm. It carries out the reaction D-ribose 5-phosphate + ATP = 5-phospho-alpha-D-ribose 1-diphosphate + AMP + H(+). It functions in the pathway metabolic intermediate biosynthesis; 5-phospho-alpha-D-ribose 1-diphosphate biosynthesis; 5-phospho-alpha-D-ribose 1-diphosphate from D-ribose 5-phosphate (route I): step 1/1. Functionally, involved in the biosynthesis of the central metabolite phospho-alpha-D-ribosyl-1-pyrophosphate (PRPP) via the transfer of pyrophosphoryl group from ATP to 1-hydroxyl of ribose-5-phosphate (Rib-5-P). This Bordetella pertussis (strain Tohama I / ATCC BAA-589 / NCTC 13251) protein is Ribose-phosphate pyrophosphokinase.